Consider the following 1374-residue polypeptide: DNA-directed RNA polymerase subunit beta (1374 aa).

Belongs to the RNA polymerase beta chain family. As to quaternary structure, the RNAP catalytic core consists of 2 alpha, 1 beta, 1 beta' and 1 omega subunit. When a sigma factor is associated with the core the holoenzyme is formed, which can initiate transcription.

The enzyme catalyses RNA(n) + a ribonucleoside 5'-triphosphate = RNA(n+1) + diphosphate. In terms of biological role, DNA-dependent RNA polymerase catalyzes the transcription of DNA into RNA using the four ribonucleoside triphosphates as substrates. This Methylobacterium radiotolerans (strain ATCC 27329 / DSM 1819 / JCM 2831 / NBRC 15690 / NCIMB 10815 / 0-1) protein is DNA-directed RNA polymerase subunit beta.